A 188-amino-acid chain; its full sequence is Small ribosomal subunit protein uS7 (188 aa).

The protein belongs to the universal ribosomal protein uS7 family. Part of the 30S ribosomal subunit.

In terms of biological role, one of the primary rRNA binding proteins, it binds directly to 16S rRNA where it nucleates assembly of the head domain of the 30S subunit. Is located at the subunit interface close to the decoding center. The chain is Small ribosomal subunit protein uS7 from Methanococcus maripaludis (strain C6 / ATCC BAA-1332).